The sequence spans 674 residues: Forkhead box protein P1 (674 aa).

Residues 1–19 show a composition bias toward polar residues; it reads MMQESGTETKSNGSAIQNG. A disordered region spans residues 1–44; that stretch reads MMQESGTETKSNGSAIQNGSSGGNHLLECGSLREGRSNGETPAV. S82 is modified (phosphoserine). A compositionally biased stretch (polar residues) spans 269–281; the sequence is MNPHASTNGQLSV. A disordered region spans residues 269–296; it reads MNPHASTNGQLSVHTPKRESLSHEEHPH. Residues 284 to 296 show a composition bias toward basic and acidic residues; it reads PKRESLSHEEHPH. Residue K285 forms a Glycyl lysine isopeptide (Lys-Gly) (interchain with G-Cter in SUMO2) linkage. The segment at 304–329 adopts a C2H2-type zinc-finger fold; that stretch reads GVCKWPGCEAVCEDFQSFLKHLNSEH. The leucine-zipper stretch occupies residues 346–367; the sequence is VQQLELQLAKDKERLQAMMTHL. Glycyl lysine isopeptide (Lys-Gly) (interchain with G-Cter in SUMO2) cross-links involve residues K370 and K375. The segment at 380–384 is CTBP1-binding; the sequence is PLNLV. Over residues 388–401 the composition is skewed to polar residues; that stretch reads TLSKSASEASPQSL. The tract at residues 388–427 is disordered; the sequence is TLSKSASEASPQSLPHTPTTPTAPITPATQGPSVITTTSM. The segment covering 402–419 has biased composition (low complexity); it reads PHTPTTPTAPITPATQGP. K440 is covalently cross-linked (Glycyl lysine isopeptide (Lys-Gly) (interchain with G-Cter in SUMO2)). The segment at residues 462-552 is a DNA-binding region (fork-head); that stretch reads RPPFTYASLI…PQKISGNPSL (91 aa). The tract at residues 608 to 674 is disordered; it reads EHTNSNESDS…EDEPVNEDME (67 aa). Residues 609–620 are compositionally biased toward polar residues; the sequence is HTNSNESDSSPG. At T650 the chain carries Phosphothreonine. Residue S655 is modified to Phosphoserine. Residues 664–674 are compositionally biased toward acidic residues; it reads YEDEPVNEDME.

As to quaternary structure, forms homodimers and heterodimers with FOXP2 and FOXP4. Dimerization is required for DNA-binding. Self-associates. Interacts with CTBP1. Interacts with NCOR2 and AR. Interacts with FOXP2. Interacts with TBR1. Interacts with AURKA; this interaction facilitates the phosphorylation of FOXP1, which suppresses the expression of FBXL7. Interacts with ZMYM2.

The protein resides in the nucleus. In terms of biological role, transcriptional repressor. Can act with CTBP1 to synergistically repress transcription but CTPBP1 is not essential. Plays an important role in the specification and differentiation of lung epithelium. Acts cooperatively with FOXP4 to regulate lung secretory epithelial cell fate and regeneration by restricting the goblet cell lineage program; the function may involve regulation of AGR2. Essential transcriptional regulator of B-cell development. Involved in regulation of cardiac muscle cell proliferation. Involved in the columnar organization of spinal motor neurons. Promotes the formation of the lateral motor neuron column (LMC) and the preganglionic motor column (PGC) and is required for respective appropriate motor axon projections. The segment-appropriate generation of spinal cord motor columns requires cooperation with other Hox proteins. Can regulate PITX3 promoter activity; may promote midbrain identity in embryonic stem cell-derived dopamine neurons by regulating PITX3. Negatively regulates the differentiation of T follicular helper cells T(FH)s. Involved in maintenance of hair follicle stem cell quiescence; the function probably involves regulation of FGF18. Represses transcription of various pro-apoptotic genes and cooperates with NF-kappa B-signaling in promoting B-cell expansion by inhibition of caspase-dependent apoptosis. Binds to CSF1R promoter elements and is involved in regulation of monocyte differentiation and macrophage functions; repression of CSF1R in monocytes seems to involve NCOR2 as corepressor. Involved in endothelial cell proliferation, tube formation and migration indicative for a role in angiogenesis; the role in neovascularization seems to implicate suppression of SEMA5B. Can negatively regulate androgen receptor signaling. Acts as a transcriptional activator of the FBXL7 promoter; this activity is regulated by AURKA. This chain is Forkhead box protein P1 (FOXP1), found in Bos taurus (Bovine).